A 925-amino-acid chain; its full sequence is Neuropilin-2 (925 aa).

Residues 1 to 22 form the signal peptide; sequence MDMFPLTWIFLALYFSGHKVRS. The Extracellular portion of the chain corresponds to 23–858; sequence QQDPPCGGRL…EKSWLYTLDP (836 aa). 3 cysteine pairs are disulfide-bonded: C28/C55, C83/C105, and C149/C175. 2 CUB domains span residues 28-142 and 149-267; these read CGGR…YEIF and CSKN…YYLV. N-linked (GlcNAc...) asparagine glycosylation is found at N152 and N157. Positions 197, 211, and 252 each coordinate Ca(2+). C208 and C230 are oxidised to a cystine. Disulfide bonds link C277-C427 and C434-C592. F5/8 type C domains follow at residues 277-427 and 434-592; these read CNAP…LFGC and CSNM…VLGC. Over residues 297–310 the composition is skewed to polar residues; that stretch reads STFSDGRWTPQQSR. Residues 297 to 317 form a disordered region; it reads STFSDGRWTPQQSRLHGDDNG. The disordered stretch occupies residues 601-621; it reads VETLGPTVKSEETTTPYPMDE. An N-linked (GlcNAc...) asparagine glycan is attached at N629. The region spanning 642-802 is the MAM domain; that stretch reads SGFNCNFDFP…TDVPLENCME (161 aa). Over residues 820–830 the composition is skewed to acidic residues; that stretch reads YEDEIDDDYEG. Positions 820-849 are disordered; that stretch reads YEDEIDDDYEGDWNNSSSTSGAGSPSSGKE. N-linked (GlcNAc...) asparagine glycosylation is found at N833 and N834. Residues 835–846 show a composition bias toward low complexity; it reads SSSTSGAGSPSS. A helical transmembrane segment spans residues 859 to 883; the sequence is ILITIIAMSSLGVLLGATCAGLLLY. The Cytoplasmic segment spans residues 884–925; sequence CTCSYSGLSSRSCTTLENYNFELYDGLKHKVKINHQKCCSEA.

Belongs to the neuropilin family. As to quaternary structure, heterodimer with NRP1. Binds PLXNB1. Found in certain neuronal populations of the CNS, including dorsal root ganglia, and in other non-neuronal tissues including mesenchymal tissue lining in the ribs.

The protein localises to the membrane. Its function is as follows. High affinity receptor for semaphorins 3C, 3F, VEGF-165 and VEGF-145 isoforms of VEGF, and the PLGF-2 isoform of PGF. This chain is Neuropilin-2 (Nrp2), found in Rattus norvegicus (Rat).